A 408-amino-acid polypeptide reads, in one-letter code: Dual-specificity RNA methyltransferase RlmN (408 aa).

Residue glutamate 126 is the Proton acceptor of the active site. Positions glutamate 132–arginine 373 constitute a Radical SAM core domain. Cysteines 139 and 384 form a disulfide. The [4Fe-4S] cluster site is built by cysteine 146, cysteine 150, and cysteine 153. S-adenosyl-L-methionine contacts are provided by residues glycine 210 to glutamate 211, serine 242, serine 264 to histidine 266, and asparagine 341. The active-site S-methylcysteine intermediate is the cysteine 384.

This sequence belongs to the radical SAM superfamily. RlmN family. [4Fe-4S] cluster serves as cofactor.

The protein localises to the cytoplasm. It catalyses the reaction adenosine(2503) in 23S rRNA + 2 reduced [2Fe-2S]-[ferredoxin] + 2 S-adenosyl-L-methionine = 2-methyladenosine(2503) in 23S rRNA + 5'-deoxyadenosine + L-methionine + 2 oxidized [2Fe-2S]-[ferredoxin] + S-adenosyl-L-homocysteine. The enzyme catalyses adenosine(37) in tRNA + 2 reduced [2Fe-2S]-[ferredoxin] + 2 S-adenosyl-L-methionine = 2-methyladenosine(37) in tRNA + 5'-deoxyadenosine + L-methionine + 2 oxidized [2Fe-2S]-[ferredoxin] + S-adenosyl-L-homocysteine. Specifically methylates position 2 of adenine 2503 in 23S rRNA and position 2 of adenine 37 in tRNAs. m2A2503 modification seems to play a crucial role in the proofreading step occurring at the peptidyl transferase center and thus would serve to optimize ribosomal fidelity. The protein is Dual-specificity RNA methyltransferase RlmN of Bartonella henselae (strain ATCC 49882 / DSM 28221 / CCUG 30454 / Houston 1) (Rochalimaea henselae).